The primary structure comprises 343 residues: GTPase Obg (343 aa).

Residues 1–159 (MKFIDEVKIQ…FELRLELRVL (159 aa)) form the Obg domain. In terms of domain architecture, OBG-type G spans 160–334 (ADVGLLGLPN…LIYAIMGHLQ (175 aa)). Residues 166–173 (GLPNAGKS), 191–195 (FTTLY), 213–216 (DIPG), 284–287 (NKVD), and 315–317 (SAL) contribute to the GTP site. Residues S173 and T193 each coordinate Mg(2+).

This sequence belongs to the TRAFAC class OBG-HflX-like GTPase superfamily. OBG GTPase family. Monomer. Mg(2+) serves as cofactor.

The protein localises to the cytoplasm. In terms of biological role, an essential GTPase which binds GTP, GDP and possibly (p)ppGpp with moderate affinity, with high nucleotide exchange rates and a fairly low GTP hydrolysis rate. Plays a role in control of the cell cycle, stress response, ribosome biogenesis and in those bacteria that undergo differentiation, in morphogenesis control. The chain is GTPase Obg from Nitrosomonas europaea (strain ATCC 19718 / CIP 103999 / KCTC 2705 / NBRC 14298).